A 453-amino-acid polypeptide reads, in one-letter code: Prenyltransferase nscD (453 aa).

Dimethylallyl diphosphate is bound by residues arginine 118, lysine 200, tyrosine 202, lysine 271, tyrosine 273, and tyrosine 428.

This sequence belongs to the tryptophan dimethylallyltransferase family.

Its pathway is secondary metabolite biosynthesis. Prenyltransferase; part of the gene cluster that mediates the biosynthesis of neosartoricin, a prenylated anthracenone that exhibits T-cell antiproliferative activity, suggestive of a physiological role as an immunosuppressive agent. The non-reducing polyketide synthase nscA probably synthesizes and cyclizes the decaketide backbone. The hydrolase nscB then mediates the product release through hydrolysis followed by spontaneous decarboxylation. The prenyltransferase nscD catalyzes the addition of the dimethylallyl group to the aromatic C5. The FAD-dependent monooxygenase nscC is then responsible for the stereospecific hydroxylation at C2. There is no gene encoding O-acetyltransferase in the nsc gene cluster; thus, the last step of 2-O-acetylation leading to neosartoricin may be catalyzed by an unidentified O-acetyltransferase. The polypeptide is Prenyltransferase nscD (Aspergillus fumigatus (strain ATCC MYA-4609 / CBS 101355 / FGSC A1100 / Af293) (Neosartorya fumigata)).